Reading from the N-terminus, the 134-residue chain is Small ribosomal subunit protein uS8c (134 aa).

This sequence belongs to the universal ribosomal protein uS8 family. In terms of assembly, part of the 30S ribosomal subunit.

It is found in the plastid. The protein resides in the chloroplast. In terms of biological role, one of the primary rRNA binding proteins, it binds directly to 16S rRNA central domain where it helps coordinate assembly of the platform of the 30S subunit. The protein is Small ribosomal subunit protein uS8c (rps8) of Panax ginseng (Korean ginseng).